We begin with the raw amino-acid sequence, 215 residues long: ATP-dependent Clp protease proteolytic subunit 1 (215 aa).

The active-site Nucleophile is serine 111. Residue histidine 136 is part of the active site.

Belongs to the peptidase S14 family. In terms of assembly, fourteen ClpP subunits assemble into 2 heptameric rings which stack back to back to give a disk-like structure with a central cavity, resembling the structure of eukaryotic proteasomes.

It is found in the cytoplasm. It catalyses the reaction Hydrolysis of proteins to small peptides in the presence of ATP and magnesium. alpha-casein is the usual test substrate. In the absence of ATP, only oligopeptides shorter than five residues are hydrolyzed (such as succinyl-Leu-Tyr-|-NHMec, and Leu-Tyr-Leu-|-Tyr-Trp, in which cleavage of the -Tyr-|-Leu- and -Tyr-|-Trp bonds also occurs).. In terms of biological role, cleaves peptides in various proteins in a process that requires ATP hydrolysis. Has a chymotrypsin-like activity. Plays a major role in the degradation of misfolded proteins. This Gluconobacter oxydans (strain 621H) (Gluconobacter suboxydans) protein is ATP-dependent Clp protease proteolytic subunit 1.